Reading from the N-terminus, the 210-residue chain is uncharacterized protein (210 aa).

This is an uncharacterized protein from Acanthamoeba polyphaga (Amoeba).